We begin with the raw amino-acid sequence, 693 residues long: Elongation factor G (693 aa).

The 275-residue stretch at Glu-8–Thr-282 folds into the tr-type G domain. GTP contacts are provided by residues Ala-17–Thr-24, Asp-81–His-85, and Asn-135–Asp-138.

The protein belongs to the TRAFAC class translation factor GTPase superfamily. Classic translation factor GTPase family. EF-G/EF-2 subfamily.

The protein localises to the cytoplasm. Catalyzes the GTP-dependent ribosomal translocation step during translation elongation. During this step, the ribosome changes from the pre-translocational (PRE) to the post-translocational (POST) state as the newly formed A-site-bound peptidyl-tRNA and P-site-bound deacylated tRNA move to the P and E sites, respectively. Catalyzes the coordinated movement of the two tRNA molecules, the mRNA and conformational changes in the ribosome. In Ruminiclostridium cellulolyticum (strain ATCC 35319 / DSM 5812 / JCM 6584 / H10) (Clostridium cellulolyticum), this protein is Elongation factor G.